Consider the following 21-residue polypeptide: APKDDTWYTGAKLGWSQYHDT.

A beta stranded transmembrane segment spans residues 6 to 16 (TWYTGAKLGWS).

Belongs to the outer membrane OOP (TC 1.B.6) superfamily. OmpA family. As to quaternary structure, monomer and homodimer.

The protein resides in the cell outer membrane. In terms of biological role, with TolR probably plays a role in maintaining the position of the peptidoglycan cell wall in the periplasm. Acts as a porin with low permeability that allows slow penetration of small solutes; an internal gate slows down solute passage. In Actinobacillus lignieresii, this protein is Outer membrane protein A.